The following is a 619-amino-acid chain: tRNA (guanine(37)-N(1))-methyltransferase 2 (619 aa).

The N-terminal 10 residues, 1 to 10 (MVSKLSLFRA), are a transit peptide targeting the mitochondrion. S-adenosyl-L-methionine contacts are provided by residues Arg-434, 472-473 (DL), 500-501 (DG), and Asn-523.

It belongs to the class I-like SAM-binding methyltransferase superfamily. TRM5/TYW2 family. Monomer.

It is found in the mitochondrion matrix. The protein resides in the nucleus. Its subcellular location is the cytoplasm. The enzyme catalyses guanosine(37) in tRNA + S-adenosyl-L-methionine = N(1)-methylguanosine(37) in tRNA + S-adenosyl-L-homocysteine + H(+). Specifically methylates the N1 position of guanosine-37 in various cytoplasmic and mitochondrial tRNAs. Methylation is not dependent on the nature of the nucleoside 5' of the target nucleoside. This is the first step in the biosynthesis of wybutosine (yW), a modified base adjacent to the anticodon of tRNAs and required for accurate decoding. The protein is tRNA (guanine(37)-N(1))-methyltransferase 2 of Arabidopsis thaliana (Mouse-ear cress).